The chain runs to 594 residues: Fidgetin-like protein 1 (594 aa).

2 disordered regions span residues 1–79 and 239–261; these read MYSP…DDEL and QSIG…KRCS. The span at 56–73 shows a compositional bias: polar residues; it reads PSDSAQQQPPFKSRSQQN. Residues alanine 319 and 359-364 contribute to the ATP site; that span reads GTGKTM.

The protein belongs to the AAA ATPase family. Hexamer. Mg(2+) is required as a cofactor. In terms of tissue distribution, expressed in germ cells.

It is found in the nucleus. It catalyses the reaction ATP + H2O = ADP + phosphate + H(+). Functionally, has a role in spindle assembly which acts in the progression through mitosis during embryogenesis. Required for fertility. This Caenorhabditis elegans protein is Fidgetin-like protein 1 (figl-1).